A 778-amino-acid polypeptide reads, in one-letter code: LPS-assembly protein LptD (778 aa).

Residues 1-23 (MKTRYSVLSVAMTAAFYTQYAQA) form the signal peptide.

This sequence belongs to the LptD family. In terms of assembly, component of the lipopolysaccharide transport and assembly complex. Interacts with LptE and LptA.

The protein resides in the cell outer membrane. Functionally, together with LptE, is involved in the assembly of lipopolysaccharide (LPS) at the surface of the outer membrane. The chain is LPS-assembly protein LptD from Actinobacillus pleuropneumoniae serotype 7 (strain AP76).